The sequence spans 568 residues: Phosphoprotein (568 aa).

Disordered regions lie at residues 1–23 (MDQD…GGRE) and 38–320 (SEPT…GIGE). Residues 7-20 (ILKEDSEVEREAPG) are compositionally biased toward basic and acidic residues. The interval 33–41 (DAVLSSEPT) is N0 binding. The span at 50 to 59 (LHNTINTPQG) shows a compositional bias: polar residues. Serine 68 is subject to Phosphoserine; by host. Over residues 83-101 (RSGEESRVSGRTSKPEAEA) the composition is skewed to basic and acidic residues. Residue serine 125 is modified to Phosphoserine; by host. Basic and acidic residues predominate over residues 150-168 (GIEDENREMAAHPDKRGED). The span at 191–206 (ASNNGRSMEPGSSHSA) shows a compositional bias: polar residues. 4 positions are modified to phosphoserine; by host: serine 192, serine 249, serine 257, and serine 260. The multimerization stretch occupies residues 344–411 (FESSRDASYV…SFRDTYKRFS (68 aa)). Residues 364-429 (YAEMTFNVCG…LLMSNLSTLH (66 aa)) are a coiled coil. The tract at residues 412-445 (EYQKEQNSLLMSNLSTLHIITDRGGKTDNTDSLT) is l protein binding. 2 positions are modified to phosphoserine; by host: serine 447 and serine 449. Residues 479-568 (DLIREDEFRD…VEEDIESLTN (90 aa)) form an interaction with the nucleocapsid (N-RNA) region. Residues 496–516 (QERDTEPRASNASRLLPSKEK) are disordered.

This sequence belongs to the respirovirus P protein family. Homotetramer. Interacts (via multimerization domain) with polymerase L; this interaction forms the polymerase complex. Interacts (via N-terminus) with N0; this interaction allows P to chaperon N0 before encapsidation and form the N-P complex. Interacts (via C-terminus) with N-RNA template; this interaction positions the polymerase on the template. In terms of processing, phosphorylated by PKC/PRKCZ, and other unknown kinases. Phosphorylation is necessary for viral transcription and replication. The N-terminus contains the majority of phosphorylated sites. Ser-249 is the major site of phosphorylation, but is not necessary for most functions.

In terms of biological role, essential cofactor of the RNA polymerase L that plays a central role in the transcription and replication by forming the polymerase complex with RNA polymerase L and recruiting L to the genomic N-RNA template for RNA synthesis. Also plays a central role in the encapsidation of nascent RNA chains by forming the encapsidation complex with the nucleocapsid protein N (N-P complex). Acts as a chaperone for newly synthesized free N protein, so-called N0, allowing encapsidation of nascent RNA chains during replication. The nucleoprotein protein N prevents excessive phosphorylation of P, which leads to down-regulation of viral transcription/ replication. Participates, together with N, in the formation of viral factories (viroplasms), which are large inclusions in the host cytoplasm where replication takes place. Recruits host PI4KB and remodel the host endoplasmic reticulum membrane to form viral replication factories. This Sendai virus (strain Z) (SeV) protein is Phosphoprotein (P/V/C).